The following is a 1397-amino-acid chain: DNA-directed RNA polymerase subunit beta' (1397 aa).

Residues C75, C77, C90, and C93 each contribute to the Zn(2+) site. Residues D465, D467, and D469 each coordinate Mg(2+). Zn(2+)-binding residues include C819, C893, C900, and C903.

Belongs to the RNA polymerase beta' chain family. The RNAP catalytic core consists of 2 alpha, 1 beta, 1 beta' and 1 omega subunit. When a sigma factor is associated with the core the holoenzyme is formed, which can initiate transcription. Requires Mg(2+) as cofactor. Zn(2+) serves as cofactor.

The enzyme catalyses RNA(n) + a ribonucleoside 5'-triphosphate = RNA(n+1) + diphosphate. DNA-dependent RNA polymerase catalyzes the transcription of DNA into RNA using the four ribonucleoside triphosphates as substrates. In Acinetobacter baylyi (strain ATCC 33305 / BD413 / ADP1), this protein is DNA-directed RNA polymerase subunit beta'.